A 75-amino-acid chain; its full sequence is MANKPFFRRRKVCPFSGDNAPAIDYKDTRLLQRYISERGKIVPSRITAVSAKKQRELARAIKRARFLALLPYAVK.

The protein belongs to the bacterial ribosomal protein bS18 family. In terms of assembly, part of the 30S ribosomal subunit. Forms a tight heterodimer with protein bS6.

In terms of biological role, binds as a heterodimer with protein bS6 to the central domain of the 16S rRNA, where it helps stabilize the platform of the 30S subunit. The protein is Small ribosomal subunit protein bS18 of Paracoccus denitrificans (strain Pd 1222).